Here is a 152-residue protein sequence, read N- to C-terminus: Endoribonuclease YbeY (152 aa).

The Zn(2+) site is built by H113, H117, and H123.

Belongs to the endoribonuclease YbeY family. Requires Zn(2+) as cofactor.

Its subcellular location is the cytoplasm. Single strand-specific metallo-endoribonuclease involved in late-stage 70S ribosome quality control and in maturation of the 3' terminus of the 16S rRNA. This chain is Endoribonuclease YbeY, found in Paracidovorax citrulli (strain AAC00-1) (Acidovorax citrulli).